Reading from the N-terminus, the 119-residue chain is Small ribosomal subunit protein bS16 (119 aa).

Residues 89–103 are compositionally biased toward basic and acidic residues; that stretch reads TTKSTKEKAATDKKA. Residues 89–119 form a disordered region; that stretch reads TTKSTKEKAATDKKAKVTKKPKTKTTTDVKK.

This sequence belongs to the bacterial ribosomal protein bS16 family.

This Spiroplasma kunkelii protein is Small ribosomal subunit protein bS16.